We begin with the raw amino-acid sequence, 124 residues long: Probable S-adenosyl-L-methionine-binding protein VNG_1115H (124 aa).

The 122-residue stretch at 3-124 (ATPIGYADTR…PVLDLKPALD (122 aa)) folds into the TsaA-like domain. S-adenosyl-L-methionine contacts are provided by residues 20–22 (PRQ), 58–59 (DD), Arg78, and 111–114 (AHGS).

Belongs to the tRNA methyltransferase O family.

This Halobacterium salinarum (strain ATCC 700922 / JCM 11081 / NRC-1) (Halobacterium halobium) protein is Probable S-adenosyl-L-methionine-binding protein VNG_1115H.